The sequence spans 274 residues: MAD2L1-binding protein (274 aa).

The interaction with MAD2L1 stretch occupies residues 45–78 (ASEAFCPRDCMVPVVFPGPVSQEGCCQFTCELLK). The residue at position 102 (S102) is a Phosphoserine.

Belongs to the MAD2L1BP family. Interacts with MAD2L1.

It is found in the nucleus. Its subcellular location is the cytoplasm. The protein localises to the cytoskeleton. The protein resides in the spindle. May function to silence the spindle checkpoint and allow mitosis to proceed through anaphase by binding MAD2L1 after it has become dissociated from the MAD2L1-CDC20 complex. In Homo sapiens (Human), this protein is MAD2L1-binding protein (MAD2L1BP).